Reading from the N-terminus, the 159-residue chain is Ribonuclease H (159 aa).

One can recognise an RNase H type-1 domain in the interval 8–150; it reads NLKEITMYTD…CDQLAVAAAK (143 aa). Mg(2+) contacts are provided by aspartate 17, glutamate 55, aspartate 77, and aspartate 142.

This sequence belongs to the RNase H family. Monomer. Requires Mg(2+) as cofactor.

The protein localises to the cytoplasm. It carries out the reaction Endonucleolytic cleavage to 5'-phosphomonoester.. In terms of biological role, endonuclease that specifically degrades the RNA of RNA-DNA hybrids. In Desulforamulus reducens (strain ATCC BAA-1160 / DSM 100696 / MI-1) (Desulfotomaculum reducens), this protein is Ribonuclease H.